The primary structure comprises 223 residues: MPARQSFTDLKNLVLCDIGNTRIHFAQNYQLFSSAKEDLKRLGIQKEIFYISVNEENEKALLNCYPNAKNIAGFFHLETDYVGLGIDRQMACLAVNNGVVVDAGSAITIDLIKEGKHLGGCILPGLAQYIHAYKKSAKILEQPFKALDSLEVLPKSTRDAVNYGMVLSVIACIQHLAKNQKIYLCGGDAKYLSAFLPHSVCKERLVFDGMEIALKKAGILECK.

17 to 24 provides a ligand contact to ATP; sequence DIGNTRIH. Residues Tyr81 and 85 to 88 contribute to the substrate site; that span reads GIDR. The Proton acceptor role is filled by Asp87. Residue Asp102 coordinates K(+). Ser105 is an ATP binding site. Thr157 contacts substrate.

This sequence belongs to the type III pantothenate kinase family. As to quaternary structure, homodimer. Requires NH4(+) as cofactor. K(+) serves as cofactor.

It localises to the cytoplasm. The enzyme catalyses (R)-pantothenate + ATP = (R)-4'-phosphopantothenate + ADP + H(+). It participates in cofactor biosynthesis; coenzyme A biosynthesis; CoA from (R)-pantothenate: step 1/5. With respect to regulation, not regulated by feedback inhibition by CoA and its thioesters as described for many other pantothenate kinases. Not inhibited by N-pentylpantothenamide (N5-Pan), and this compound cannot act as a substrate either. Functionally, catalyzes the phosphorylation of pantothenate (Pan), the first step in CoA biosynthesis. Can also utilize CTP or GTP instead of ATP as a phosphoryl donor, albeit to a lesser extent. The sequence is that of Type III pantothenate kinase (coaX) from Helicobacter pylori (strain ATCC 700392 / 26695) (Campylobacter pylori).